The following is a 123-amino-acid chain: Small ribosomal subunit protein uS13 (123 aa).

The segment at 94-123 (GLPVRGQSTKSNARTRKGPRKTVAGKKSTK) is disordered. Positions 106 to 123 (ARTRKGPRKTVAGKKSTK) are enriched in basic residues.

Belongs to the universal ribosomal protein uS13 family. As to quaternary structure, part of the 30S ribosomal subunit. Forms a loose heterodimer with protein S19. Forms two bridges to the 50S subunit in the 70S ribosome.

Located at the top of the head of the 30S subunit, it contacts several helices of the 16S rRNA. In the 70S ribosome it contacts the 23S rRNA (bridge B1a) and protein L5 of the 50S subunit (bridge B1b), connecting the 2 subunits; these bridges are implicated in subunit movement. Contacts the tRNAs in the A and P-sites. This is Small ribosomal subunit protein uS13 from Mycoplasmopsis agalactiae (strain NCTC 10123 / CIP 59.7 / PG2) (Mycoplasma agalactiae).